We begin with the raw amino-acid sequence, 210 residues long: Orotate phosphoribosyltransferase (210 aa).

5-phospho-alpha-D-ribose 1-diphosphate contacts are provided by residues R96, K100, H102, and 122-130 (EDLISTGGS). Residue S126 participates in orotate binding.

Belongs to the purine/pyrimidine phosphoribosyltransferase family. PyrE subfamily. As to quaternary structure, homodimer. It depends on Mg(2+) as a cofactor.

It catalyses the reaction orotidine 5'-phosphate + diphosphate = orotate + 5-phospho-alpha-D-ribose 1-diphosphate. It functions in the pathway pyrimidine metabolism; UMP biosynthesis via de novo pathway; UMP from orotate: step 1/2. Catalyzes the transfer of a ribosyl phosphate group from 5-phosphoribose 1-diphosphate to orotate, leading to the formation of orotidine monophosphate (OMP). The polypeptide is Orotate phosphoribosyltransferase (pyrE) (Streptococcus pneumoniae serotype 19F (strain G54)).